The primary structure comprises 121 residues: Small ribosomal subunit protein uS13 (121 aa).

The disordered stretch occupies residues 97–121; that stretch reads VRGQRTRTNARTRRGARKTVAGKKK. Positions 100-121 are enriched in basic residues; the sequence is QRTRTNARTRRGARKTVAGKKK.

This sequence belongs to the universal ribosomal protein uS13 family. As to quaternary structure, part of the 30S ribosomal subunit. Forms a loose heterodimer with protein S19. Forms two bridges to the 50S subunit in the 70S ribosome.

In terms of biological role, located at the top of the head of the 30S subunit, it contacts several helices of the 16S rRNA. In the 70S ribosome it contacts the 23S rRNA (bridge B1a) and protein L5 of the 50S subunit (bridge B1b), connecting the 2 subunits; these bridges are implicated in subunit movement. Contacts the tRNAs in the A and P-sites. This chain is Small ribosomal subunit protein uS13, found in Synechococcus sp. (strain CC9605).